The chain runs to 418 residues: UDP-N-acetylglucosamine 1-carboxyvinyltransferase 1 (418 aa).

Position 22 to 23 (22 to 23 (KN)) interacts with phosphoenolpyruvate. A UDP-N-acetyl-alpha-D-glucosamine-binding site is contributed by arginine 94. Catalysis depends on cysteine 118, which acts as the Proton donor. Cysteine 118 is modified (2-(S-cysteinyl)pyruvic acid O-phosphothioketal). Residues 123 to 127 (RPIDL), aspartate 306, and isoleucine 328 contribute to the UDP-N-acetyl-alpha-D-glucosamine site.

The protein belongs to the EPSP synthase family. MurA subfamily.

Its subcellular location is the cytoplasm. It carries out the reaction phosphoenolpyruvate + UDP-N-acetyl-alpha-D-glucosamine = UDP-N-acetyl-3-O-(1-carboxyvinyl)-alpha-D-glucosamine + phosphate. It participates in cell wall biogenesis; peptidoglycan biosynthesis. In terms of biological role, cell wall formation. Adds enolpyruvyl to UDP-N-acetylglucosamine. The sequence is that of UDP-N-acetylglucosamine 1-carboxyvinyltransferase 1 from Clostridium acetobutylicum (strain ATCC 824 / DSM 792 / JCM 1419 / IAM 19013 / LMG 5710 / NBRC 13948 / NRRL B-527 / VKM B-1787 / 2291 / W).